Consider the following 206-residue polypeptide: Small ribosomal subunit protein uS4 (206 aa).

The region spanning glycine 96 to lysine 156 is the S4 RNA-binding domain.

This sequence belongs to the universal ribosomal protein uS4 family. Part of the 30S ribosomal subunit. Contacts protein S5. The interaction surface between S4 and S5 is involved in control of translational fidelity.

Its function is as follows. One of the primary rRNA binding proteins, it binds directly to 16S rRNA where it nucleates assembly of the body of the 30S subunit. Functionally, with S5 and S12 plays an important role in translational accuracy. The protein is Small ribosomal subunit protein uS4 of Haemophilus influenzae (strain ATCC 51907 / DSM 11121 / KW20 / Rd).